Reading from the N-terminus, the 445-residue chain is Gamma-glutamyl phosphate reductase (445 aa).

This sequence belongs to the gamma-glutamyl phosphate reductase family.

Its subcellular location is the cytoplasm. It carries out the reaction L-glutamate 5-semialdehyde + phosphate + NADP(+) = L-glutamyl 5-phosphate + NADPH + H(+). Its pathway is amino-acid biosynthesis; L-proline biosynthesis; L-glutamate 5-semialdehyde from L-glutamate: step 2/2. In terms of biological role, catalyzes the NADPH-dependent reduction of L-glutamate 5-phosphate into L-glutamate 5-semialdehyde and phosphate. The product spontaneously undergoes cyclization to form 1-pyrroline-5-carboxylate. The sequence is that of Gamma-glutamyl phosphate reductase from Saccharopolyspora erythraea (strain ATCC 11635 / DSM 40517 / JCM 4748 / NBRC 13426 / NCIMB 8594 / NRRL 2338).